Here is a 595-residue protein sequence, read N- to C-terminus: Aspartate--tRNA(Asp/Asn) ligase (595 aa).

Position 175 (Glu175) interacts with L-aspartate. An aspartate region spans residues 199–202; the sequence is QQYK. L-aspartate-binding residues include Arg221 and His454. ATP is bound at residue 221-223; the sequence is RDE. Glu488 is an ATP binding site. Arg495 is an L-aspartate binding site. 540–543 contacts ATP; that stretch reads GIDR.

Belongs to the class-II aminoacyl-tRNA synthetase family. Type 1 subfamily. Homodimer.

The protein resides in the cytoplasm. It catalyses the reaction tRNA(Asx) + L-aspartate + ATP = L-aspartyl-tRNA(Asx) + AMP + diphosphate. Its function is as follows. Aspartyl-tRNA synthetase with relaxed tRNA specificity since it is able to aspartylate not only its cognate tRNA(Asp) but also tRNA(Asn). Reaction proceeds in two steps: L-aspartate is first activated by ATP to form Asp-AMP and then transferred to the acceptor end of tRNA(Asp/Asn). This chain is Aspartate--tRNA(Asp/Asn) ligase, found in Agrobacterium fabrum (strain C58 / ATCC 33970) (Agrobacterium tumefaciens (strain C58)).